The primary structure comprises 247 residues: Cytochrome c oxidase subunit 2 (247 aa).

An N-terminal signal peptide occupies residues 1 to 11 (MLLIINNIINN). The Mitochondrial intermembrane segment spans residues 12–38 (DVPTPWGVYFQDSATPNHEGIIELHDN). The chain crosses the membrane as a helical span at residues 39–59 (IMFYLVLILCLVSWLLFSIVK). The Mitochondrial matrix segment spans residues 60 to 78 (DGSKNPLPHKYLVHGQTIE). A helical transmembrane segment spans residues 79–101 (IIWTILPALVLLVIAFPSFILLY). Residues 102 to 247 (LCDEVISPAM…KEFLTWLNEQ (146 aa)) are Mitochondrial intermembrane-facing. H182, C217, E219, C221, H225, and M228 together coordinate Cu cation. E219 is a binding site for Mg(2+).

It belongs to the cytochrome c oxidase subunit 2 family. Component of the cytochrome c oxidase (complex IV, CIV), a multisubunit enzyme composed of a catalytic core of 3 subunits and several supernumerary subunits. The complex exists as a monomer or a dimer and forms supercomplexes (SCs) in the inner mitochondrial membrane with ubiquinol-cytochrome c oxidoreductase (cytochrome b-c1 complex, complex III, CIII). The cofactor is Cu cation. The signal sequence of COX2 is processed by IMP1.

The protein resides in the mitochondrion inner membrane. The enzyme catalyses 4 Fe(II)-[cytochrome c] + O2 + 8 H(+)(in) = 4 Fe(III)-[cytochrome c] + 2 H2O + 4 H(+)(out). Component of the cytochrome c oxidase, the last enzyme in the mitochondrial electron transport chain which drives oxidative phosphorylation. The respiratory chain contains 3 multisubunit complexes succinate dehydrogenase (complex II, CII), ubiquinol-cytochrome c oxidoreductase (cytochrome b-c1 complex, complex III, CIII) and cytochrome c oxidase (complex IV, CIV), that cooperate to transfer electrons derived from NADH and succinate to molecular oxygen, creating an electrochemical gradient over the inner membrane that drives transmembrane transport and the ATP synthase. Cytochrome c oxidase is the component of the respiratory chain that catalyzes the reduction of oxygen to water. Electrons originating from reduced cytochrome c in the intermembrane space (IMS) are transferred via the dinuclear copper A center (CU(A)) of subunit 2 and heme A of subunit 1 to the active site in subunit 1, a binuclear center (BNC) formed by heme A3 and copper B (CU(B)). The BNC reduces molecular oxygen to 2 water molecules using 4 electrons from cytochrome c in the IMS and 4 protons from the mitochondrial matrix. The polypeptide is Cytochrome c oxidase subunit 2 (COX2) (Wickerhamomyces canadensis (Yeast)).